Consider the following 324-residue polypeptide: Olfactory receptor 52N5 (324 aa).

At 1-33 (MPLFNSLCWFPTIHVTPPSFILNGIPGLERVHV) the chain is on the extracellular side. A helical transmembrane segment spans residues 34-54 (WISLPLCTMYIIFLVGNLGLV). The Cytoplasmic segment spans residues 55-62 (YLIYYEES). Residues 63-84 (LHHPMYFFFGHALSLIDLLTCT) traverse the membrane as a helical segment. Topologically, residues 85–108 (TTLPNALCIFWFSLKEINFNACLA) are extracellular. An intrachain disulfide couples cysteine 106 to cysteine 198. A helical membrane pass occupies residues 109–129 (QMFFVHGFTGVESGVLMLMAL). Topologically, residues 130–148 (DRYVAICYPLRYATTLTNP) are cytoplasmic. A helical transmembrane segment spans residues 149-169 (IIAKAELATFLRGVLLMIPFP). Residues 170–205 (FLVKRLPFCQSNIISHTYCDHMSVVKLSCASIKVNV) lie on the Extracellular side of the membrane. Residues 206 to 226 (IYGLMVALLIGVFDICCISLS) form a helical membrane-spanning segment. Residues 227–246 (YTLILKAAISLSSSDARQKA) are Cytoplasmic-facing. A helical transmembrane segment spans residues 247-267 (FSTCTAHISAIIITYVPAFFT). The Extracellular segment spans residues 268-283 (FFAHRFGGHTIPPSLH). Residues 284 to 304 (IIVANLYLLLPPTLNPIVYGV) traverse the membrane as a helical segment. The Cytoplasmic portion of the chain corresponds to 305-324 (KTKQIRKSVIKFFQGDKGAG).

The protein belongs to the G-protein coupled receptor 1 family.

The protein localises to the cell membrane. Its function is as follows. Odorant receptor. In Homo sapiens (Human), this protein is Olfactory receptor 52N5 (OR52N5).